A 1043-amino-acid chain; its full sequence is Integrator complex subunit 3 (1043 aa).

Met1 carries the post-translational modification N-acetylmethionine. Phosphoserine occurs at positions 502, 537, and 995. The disordered stretch occupies residues 977 to 1043 (YEDSSTKPPK…GSSAVGSDSD (67 aa)). Residues 1008-1022 (AEEESGSSSASEEED) show a composition bias toward acidic residues.

Belongs to the Integrator subunit 3 family. In terms of assembly, component of the Integrator complex, composed of core subunits INTS1, INTS2, INTS3, INTS4, INTS5, INTS6, INTS7, INTS8, INTS9/RC74, INTS10, INTS11/CPSF3L, INTS12, INTS13, INTS14 and INTS15. The core complex associates with protein phosphatase 2A subunits PPP2CA and PPP2R1A, to form the Integrator-PP2A (INTAC) complex. Component of the SOSS complex, composed of SOSS-B (SOSS-B1/NABP2 or SOSS-B2/NABP1), SOSS-A/INTS3 and SOSS-C/INIP. SOSS complexes containing SOSS-B1/NABP2 are more abundant than complexes containing SOSS-B2/NABP1. Interacts with SOSS-B1/NABP2, SOSS-B2/NABP1 and SOSS-C/INIP; the interaction is direct. Interacts with NBN/NBS1.

Its subcellular location is the nucleus. The protein localises to the cytoplasm. In terms of biological role, component of the integrator complex, a multiprotein complex that terminates RNA polymerase II (Pol II) transcription in the promoter-proximal region of genes. The integrator complex provides a quality checkpoint during transcription elongation by driving premature transcription termination of transcripts that are unfavorably configured for transcriptional elongation: the complex terminates transcription by (1) catalyzing dephosphorylation of the C-terminal domain (CTD) of Pol II subunit POLR2A/RPB1 and SUPT5H/SPT5, (2) degrading the exiting nascent RNA transcript via endonuclease activity and (3) promoting the release of Pol II from bound DNA. The integrator complex is also involved in terminating the synthesis of non-coding Pol II transcripts, such as enhancer RNAs (eRNAs), small nuclear RNAs (snRNAs), telomerase RNAs and long non-coding RNAs (lncRNAs). Within the integrator complex, INTS3 is involved in the post-termination step: INTS3 binds INTS7 in the open conformation of integrator complex and prevents the rebinding of Pol II to the integrator after termination cycle. Mediates recruitment of cytoplasmic dynein to the nuclear envelope, probably as component of the integrator complex. Its function is as follows. Component of the SOSS complex, a multiprotein complex that functions downstream of the MRN complex to promote DNA repair and G2/M checkpoint. The SOSS complex associates with single-stranded DNA at DNA lesions and influences diverse endpoints in the cellular DNA damage response including cell-cycle checkpoint activation, recombinational repair and maintenance of genomic stability. The SOSS complex is required for efficient homologous recombination-dependent repair of double-strand breaks (DSBs) and ATM-dependent signaling pathways. In the SOSS complex, it is required for the assembly of the complex and for stabilization of the complex at DNA damage sites. The polypeptide is Integrator complex subunit 3 (INTS3) (Pongo abelii (Sumatran orangutan)).